A 709-amino-acid chain; its full sequence is MESPTKEIEEFESNSLKYLQPEQIEKIWLRLRGLRKYKKTSQRLRSLVKQLERGEASVVDLKKNLEYAATVLESVYIDETRRLLDTEDELSDIQSDAVPSEVRDWLASTFTRQMGMMLRRSDEKPRFKSIVHAVQAGIFVERMYRRTSNMVGLSYPPAVIEALKDVDKWSFDVFSLNEASGDHALKFIFYELLTRYDLISRFKIPISALVSFVEALEVGYSKHKNPYHNLMHAADVTQTVHYLLYKTGVANWLTELEIFAIIFSAAIHDYEHTGTTNNFHIQTRSDPAILYNDRSVLENHHLSAAYRLLQDDEEMNILINLSKDDWREFRTLVIEMVMATDMSCHFQQIKAMKTALQQPEAIEKPKALSLMLHTADISHPAKAWDLHHRWTMSLLEEFFRQGDREAELGLPFSPLCDRKSTMVAQSQVGFIDFIVEPTFTVLTDMTEKIVSPLIDETSQTGGTGQRRSSLNSISSSDAKRSGVKTSGSEGSAPINNSVISVDYKSFKATWTEVVHINRERWRAKVPKEEKAKKEAEEKARLAAEEQQKEMEAKSQAEEGASGKAEKKTSGETKNQVNGTRANKSDNPRGKNSKAEKSSGEQQQNGDFKDGKNKTDKKDHSNIGNDSKKTDGTKQRSHGSPAPSTSSTCRLTLPVIKPPLRHFKRPAYASSSYAPSVSKKTDEHPARYKMLDQRIKMKKIQNISHNWNRK.

Methionine 1 bears the N-acetylmethionine mark. A calmodulin-binding region spans residues glutamate 123–arginine 146. The PDEase domain maps to valine 151–glutamate 528. Residue histidine 228 is the Proton donor of the active site. Positions 232, 268, 269, and 376 each coordinate Zn(2+). Aspartate 269 contributes to the Mg(2+) binding site. Disordered regions lie at residues leucine 453 to asparagine 495 and alanine 523 to leucine 650. Over residues valine 483–asparagine 495 the composition is skewed to polar residues. The span at alanine 523–alanine 556 shows a compositional bias: basic and acidic residues. Residues glutamate 571 to alanine 581 are compositionally biased toward polar residues. Composition is skewed to basic and acidic residues over residues asparagine 582 to serine 598 and aspartate 606 to lysine 633.

Belongs to the cyclic nucleotide phosphodiesterase family. PDE1 subfamily. As to quaternary structure, homodimer. Zn(2+) is required as a cofactor. The cofactor is Mg(2+). As to expression, isoform PDE1C2 is present in the heart and brain and, at lower levels in the lung, liver, kidney and skeletal muscle. Isoform PDE1C1 is expressed in the heart and brain and, at lower levels in lung. Also expressed at low levels in uterus and testis.

It localises to the lysosome. It catalyses the reaction a nucleoside 3',5'-cyclic phosphate + H2O = a nucleoside 5'-phosphate + H(+). The catalysed reaction is 3',5'-cyclic GMP + H2O = GMP + H(+). It carries out the reaction 3',5'-cyclic AMP + H2O = AMP + H(+). With respect to regulation, type I PDE are activated by the binding of calmodulin in the presence of Ca(2+). Its function is as follows. Calmodulin-dependent cyclic nucleotide phosphodiesterase with a dual specificity for the second messengers cAMP and cGMP, which are key regulators of many important physiological processes. Has a high affinity for both cAMP and cGMP. Modulates the amplitude and duration of the cAMP signal in sensory cilia in response to odorant stimulation, hence contributing to the generation of action potentials. Regulates smooth muscle cell proliferation. Regulates the stability of growth factor receptors, including PDGFRB. The polypeptide is Dual specificity calcium/calmodulin-dependent 3',5'-cyclic nucleotide phosphodiesterase 1C (Homo sapiens (Human)).